The following is a 114-amino-acid chain: MNKRELYDSFEELEKQTKFTLSQIERIKAEMGKVIEKNAELEIENQHLREHLHEIEQKQKGNKEGTELSKSRKNLEKLYEEGFHVCNVDNMYGSRRVNDEPCVFCQDVIYGDRH.

Zn(2+) is bound by residues His84, Cys86, Cys102, and Cys105.

This sequence belongs to the YabA family. In terms of assembly, homotetramer. Interacts with both DnaA and DnaN, acting as a bridge between these two proteins. Zn(2+) is required as a cofactor.

The protein localises to the cytoplasm. The protein resides in the nucleoid. Involved in control of chromosome replication initiation. Inhibits the cooperative binding of DnaA to the oriC region, thus negatively regulating initiation of chromosome replication. Inhibits the ability of DnaA-ATP to form a helix on DNA; does not disassemble preformed DnaA-DNA helices. Decreases the residence time of DnaA on the chromosome at its binding sites (oriC, replication forks and promoter-binding sites). Tethers DnaA to the replication machinery via the DNA polymerase beta sliding clamp subunit (dnaN). Associates with oriC and other DnaA targets on the chromosome in a DnaA-dependent manner. The sequence is that of Replication initiation control protein YabA from Ligilactobacillus salivarius (strain UCC118) (Lactobacillus salivarius).